A 256-amino-acid chain; its full sequence is uncharacterized protein (256 aa).

This is an uncharacterized protein from Acanthamoeba polyphaga mimivirus (APMV).